A 155-amino-acid polypeptide reads, in one-letter code: cAMP-dependent protein kinase type II-alpha regulatory subunit (155 aa).

Residues 1–34 are disordered; it reads SGSQDLEPSSGLVTDAIADSESEDDEDLDVPIPS. The dimerization and phosphorylation stretch occupies residues 1-81; the sequence is SGSQDLEPSS…LQEACKDILL (81 aa). A compositionally biased stretch (acidic residues) spans 18–29; sequence ADSESEDDEDLD. A phosphoserine mark is found at Ser20 and Ser22. Ser41 is modified (phosphoserine; by PKA). Residues 82–155 and Glu150 each bind 3',5'-cyclic AMP; that span reads FKNL…ALMY.

Belongs to the cAMP-dependent kinase regulatory chain family. As to quaternary structure, the inactive form of the enzyme is composed of two regulatory chains and two catalytic chains. Activation by cAMP produces two active catalytic monomers and a regulatory dimer that binds four cAMP molecules. Interacts with AKAP4 and CBFA2T3. Interacts with the phosphorylated form of PJA2. Interacts with MYRIP; this interaction may link PKA to components of the exocytosis machinery, thus facilitating exocytosis, including insulin release. Forms a complex composed of PRKAR2A, GSK3B and GSKIP through GSKIP interaction; facilitates PKA-induced phosphorylation and regulates GSK3B activity. Interacts with ADCY8; inhibits adenylate cyclase activity through PKA phosphorylation. Post-translationally, phosphorylated by the activated catalytic chain. In terms of tissue distribution, four types of regulatory chains are found: I-alpha, I-beta, II-alpha, and II-beta. Their expression varies among tissues and is in some cases constitutive and in others inducible.

It is found in the cytoplasm. The protein localises to the cell membrane. In terms of biological role, regulatory subunit of the cAMP-dependent protein kinases involved in cAMP signaling in cells. Type II regulatory chains mediate membrane association by binding to anchoring proteins, including the MAP2 kinase. The protein is cAMP-dependent protein kinase type II-alpha regulatory subunit (PRKAR2A) of Sus scrofa (Pig).